We begin with the raw amino-acid sequence, 133 residues long: Ribosome-binding factor A (133 aa).

It belongs to the RbfA family. Monomer. Binds 30S ribosomal subunits, but not 50S ribosomal subunits or 70S ribosomes.

Its subcellular location is the cytoplasm. One of several proteins that assist in the late maturation steps of the functional core of the 30S ribosomal subunit. Associates with free 30S ribosomal subunits (but not with 30S subunits that are part of 70S ribosomes or polysomes). Required for efficient processing of 16S rRNA. May interact with the 5'-terminal helix region of 16S rRNA. The protein is Ribosome-binding factor A of Enterobacter sp. (strain 638).